The sequence spans 744 residues: Cytosolic neutral trehalase (744 aa).

Ca(2+)-binding residues include aspartate 99, aspartate 101, asparagine 103, glutamine 105, and aspartate 110. Substrate contacts are provided by residues arginine 286, 293 to 294, asparagine 330, 339 to 341, glutamate 406, arginine 455, and glycine 458; these read WD and RSQ. Residues aspartate 460 and glutamate 665 each act as proton donor/acceptor in the active site.

It belongs to the glycosyl hydrolase 37 family. Ca(2+) is required as a cofactor.

The protein localises to the cytoplasm. The enzyme catalyses alpha,alpha-trehalose + H2O = alpha-D-glucose + beta-D-glucose. The protein operates within carbohydrate degradation. Hydrolyzes intracellular trehalose to glucose. This chain is Cytosolic neutral trehalase, found in Neurospora crassa (strain ATCC 24698 / 74-OR23-1A / CBS 708.71 / DSM 1257 / FGSC 987).